The sequence spans 371 residues: Protein-glutamate methylesterase/protein-glutamine glutaminase 3 (371 aa).

The 116-residue stretch at 5–120 (RVVVIDDSAY…SEEILTIRED (116 aa)) folds into the Response regulatory domain. At Asp56 the chain carries 4-aspartylphosphate. The 189-residue stretch at 174 to 362 (PAGRLEVVAI…LDRMSREIIQ (189 aa)) folds into the CheB-type methylesterase domain. Residues Ser186, His213, and Asp309 contribute to the active site.

It belongs to the CheB family. In terms of processing, phosphorylated by CheA. Phosphorylation of the N-terminal regulatory domain activates the methylesterase activity.

The protein localises to the cytoplasm. The enzyme catalyses [protein]-L-glutamate 5-O-methyl ester + H2O = L-glutamyl-[protein] + methanol + H(+). It catalyses the reaction L-glutaminyl-[protein] + H2O = L-glutamyl-[protein] + NH4(+). Functionally, involved in chemotaxis. Part of a chemotaxis signal transduction system that modulates chemotaxis in response to various stimuli. Catalyzes the demethylation of specific methylglutamate residues introduced into the chemoreceptors (methyl-accepting chemotaxis proteins or MCP) by CheR. Also mediates the irreversible deamidation of specific glutamine residues to glutamic acid. This is Protein-glutamate methylesterase/protein-glutamine glutaminase 3 from Geobacter sulfurreducens (strain ATCC 51573 / DSM 12127 / PCA).